The following is a 220-amino-acid chain: 1-Cys peroxiredoxin A (220 aa).

The 162-residue stretch at 4–165 (LTIGDTVPNL…VVRAVDALQT (162 aa)) folds into the Thioredoxin domain. The active-site Cysteine sulfenic acid (-SOH) intermediate is cysteine 46. The Bipartite nuclear localization signal signature appears at 195 to 218 (KEKFPQGFDTADLPSGKGYLRFTK).

It belongs to the peroxiredoxin family. Prx6 subfamily.

It is found in the nucleus. The protein resides in the cytoplasm. The enzyme catalyses a hydroperoxide + [thioredoxin]-dithiol = an alcohol + [thioredoxin]-disulfide + H2O. In terms of biological role, thiol-specific peroxidase that catalyzes the reduction of hydrogen peroxide and organic hydroperoxides to water and alcohols, respectively. Seems to contribute to the inhibition of germination during stress. The chain is 1-Cys peroxiredoxin A from Oryza sativa subsp. japonica (Rice).